Reading from the N-terminus, the 445-residue chain is Methylthioribose-1-phosphate isomerase (445 aa).

The active-site Proton donor is Asp286.

This sequence belongs to the eIF-2B alpha/beta/delta subunits family. MtnA subfamily.

The protein localises to the cytoplasm. The protein resides in the nucleus. The enzyme catalyses 5-(methylsulfanyl)-alpha-D-ribose 1-phosphate = 5-(methylsulfanyl)-D-ribulose 1-phosphate. It functions in the pathway amino-acid biosynthesis; L-methionine biosynthesis via salvage pathway; L-methionine from S-methyl-5-thio-alpha-D-ribose 1-phosphate: step 1/6. Catalyzes the interconversion of methylthioribose-1-phosphate (MTR-1-P) into methylthioribulose-1-phosphate (MTRu-1-P). The protein is Methylthioribose-1-phosphate isomerase (mri1) of Sclerotinia sclerotiorum (strain ATCC 18683 / 1980 / Ss-1) (White mold).